A 115-amino-acid chain; its full sequence is MAPRSLYLLAVLLFSANLFAGVGFAAAAEGPEDKGLTKGGKGKGEKGTKVGADDTNGTDPDPEPEPEPEPEPEPEPEPEPEPEPEPEPEPEPGAATLKSVALPFAIAAAALVAAF.

Residues 1-27 form the signal peptide; sequence MAPRSLYLLAVLLFSANLFAGVGFAAA. A disordered region spans residues 27 to 97; that stretch reads AAEGPEDKGL…PEPEPGAATL (71 aa). The segment covering 31 to 52 has biased composition (basic and acidic residues); that stretch reads PEDKGLTKGGKGKGEKGTKVGA. An N-linked (GlcNAc...) asparagine glycan is attached at Asn56. 17 consecutive repeat copies span residues 59–60, 61–62, 63–64, 65–66, 67–68, 69–70, 71–72, 73–74, 75–76, 77–78, 79–80, 81–82, 83–84, 85–86, 87–88, 89–90, and 91–92. Residues 59–92 form a 17 X 2 AA tandem repeats of [DE]-P region; that stretch reads DPDPEPEPEPEPEPEPEPEPEPEPEPEPEPEPEP. The segment covering 60–90 has biased composition (acidic residues); it reads PDPEPEPEPEPEPEPEPEPEPEPEPEPEPEP. The GPI-anchor amidated glycine moiety is linked to residue Gly93. The propeptide at 94-115 is removed in mature form; sequence AATLKSVALPFAIAAAALVAAF.

It is found in the cell membrane. Its function is as follows. Major surface antigen of procyclic forms. This is Procyclic form-specific polypeptide (PROA) from Trypanosoma brucei brucei.